Reading from the N-terminus, the 282-residue chain is Pantothenate synthetase (282 aa).

30–37 (MGYLHEGH) contributes to the ATP binding site. The Proton donor role is filled by His37. Position 61 (Gln61) interacts with (R)-pantoate. Residue Gln61 coordinates beta-alanine. 147-150 (GMKD) provides a ligand contact to ATP. Residue Gln153 participates in (R)-pantoate binding. ATP is bound by residues Val176 and 184–187 (KSSR).

Belongs to the pantothenate synthetase family. Homodimer.

Its subcellular location is the cytoplasm. It carries out the reaction (R)-pantoate + beta-alanine + ATP = (R)-pantothenate + AMP + diphosphate + H(+). Its pathway is cofactor biosynthesis; (R)-pantothenate biosynthesis; (R)-pantothenate from (R)-pantoate and beta-alanine: step 1/1. Catalyzes the condensation of pantoate with beta-alanine in an ATP-dependent reaction via a pantoyl-adenylate intermediate. The chain is Pantothenate synthetase from Geobacillus sp. (strain WCH70).